The chain runs to 339 residues: Glycerol-3-phosphate dehydrogenase [NAD(P)+] (339 aa).

Ser-11, Trp-12, and Lys-109 together coordinate NADPH. Sn-glycerol 3-phosphate-binding residues include Lys-109, Gly-140, and Ser-142. Ala-144 serves as a coordination point for NADPH. 5 residues coordinate sn-glycerol 3-phosphate: Lys-195, Asp-249, Ser-259, Arg-260, and Asn-261. The Proton acceptor role is filled by Lys-195. Residue Arg-260 participates in NADPH binding. Residues Val-284 and Glu-286 each contribute to the NADPH site.

Belongs to the NAD-dependent glycerol-3-phosphate dehydrogenase family.

It localises to the cytoplasm. The catalysed reaction is sn-glycerol 3-phosphate + NAD(+) = dihydroxyacetone phosphate + NADH + H(+). It catalyses the reaction sn-glycerol 3-phosphate + NADP(+) = dihydroxyacetone phosphate + NADPH + H(+). It functions in the pathway membrane lipid metabolism; glycerophospholipid metabolism. Catalyzes the reduction of the glycolytic intermediate dihydroxyacetone phosphate (DHAP) to sn-glycerol 3-phosphate (G3P), the key precursor for phospholipid synthesis. The polypeptide is Glycerol-3-phosphate dehydrogenase [NAD(P)+] (Lactobacillus johnsonii (strain CNCM I-12250 / La1 / NCC 533)).